A 114-amino-acid polypeptide reads, in one-letter code: MSSAIPTSSVNPVKGMRKNGKNWHDSKKPFRPTSGLTSYEKRLEARKRQEAVKEHERELREEKEAERKAQIQKIKDRRAAKEEKERYEKMAEKMHRKRVERLKRREKRNKLLHS.

Residues 1–11 are compositionally biased toward polar residues; sequence MSSAIPTSSVN. The tract at residues 1–114 is disordered; that stretch reads MSSAIPTSSV…REKRNKLLHS (114 aa). Basic and acidic residues predominate over residues 39-93; that stretch reads YEKRLEARKRQEAVKEHERELREEKEAERKAQIQKIKDRRAAKEEKERYEKMAEK. Residues 40 to 101 are a coiled coil; that stretch reads EKRLEARKRQ…EKMHRKRVER (62 aa). Basic residues predominate over residues 94–114; sequence MHRKRVERLKRREKRNKLLHS.

Belongs to the CGR1 family.

Its subcellular location is the nucleus. It is found in the nucleolus. Its function is as follows. Involved in nucleolar integrity and required for processing of the pre-rRNA for the 60S ribosome subunit. The chain is rRNA-processing protein cgrA (cgrA) from Aspergillus fumigatus (strain ATCC MYA-4609 / CBS 101355 / FGSC A1100 / Af293) (Neosartorya fumigata).